The chain runs to 851 residues: Beta-galactosidase 3 (851 aa).

Residues Met-1 to Ala-29 form the signal peptide. Asn-35 is a glycosylation site (N-linked (GlcNAc...) asparagine). Glu-194 serves as the catalytic Proton donor. The active-site Nucleophile is Glu-263. Asn-361, Asn-475, Asn-528, and Asn-533 each carry an N-linked (GlcNAc...) asparagine glycan. Residues Gly-765–Ser-851 enclose the SUEL-type lectin domain.

It belongs to the glycosyl hydrolase 35 family.

The protein localises to the secreted. It localises to the extracellular space. The protein resides in the apoplast. It carries out the reaction Hydrolysis of terminal non-reducing beta-D-galactose residues in beta-D-galactosides.. The sequence is that of Beta-galactosidase 3 from Oryza sativa subsp. japonica (Rice).